The following is a 156-amino-acid chain: Protein SprT (156 aa).

The 139-residue stretch at Asn-15–Leu-153 folds into the SprT-like domain. Residue His-67 coordinates Zn(2+). The active site involves Glu-68. His-71 lines the Zn(2+) pocket.

Belongs to the SprT family. The cofactor is Zn(2+).

The protein resides in the cytoplasm. This is Protein SprT from Glaesserella parasuis serovar 5 (strain SH0165) (Haemophilus parasuis).